Consider the following 107-residue polypeptide: Pre-mRNA-splicing factor RDS3 (107 aa).

It belongs to the PHF5 family. Component of the spliceosome where it interacts with CUS1, HSH49, HSH155, IST3 and RSE1. Also interacts with YRA1.

The protein localises to the nucleus. Required for pre-mRNA splicing. Involved in regulation of drug sensitivity and may play a role in multidrug resistance. The chain is Pre-mRNA-splicing factor RDS3 (RDS3) from Saccharomyces cerevisiae (strain ATCC 204508 / S288c) (Baker's yeast).